Reading from the N-terminus, the 82-residue chain is Lectin-D2 (82 aa).

Chitin-binding type-1 domains follow at residues 1–42 (APEC…QCDY) and 43–82 (WRCGRDFGGRLCEEDMCCSKYGWCGYSDDHCEDGCQSQCD). Disulfide bonds link Cys4–Cys19, Cys13–Cys25, Cys18–Cys32, and Cys36–Cys40. A carbohydrate-binding residues include Ser20, Trp22, Tyr24, and Tyr31. Trp43 is a binding site for a carbohydrate. 4 disulfides stabilise this stretch: Cys45/Cys60, Cys54/Cys66, Cys59/Cys73, and Cys77/Cys81. Positions 61, 63, 65, and 72 each coordinate a carbohydrate.

In terms of assembly, monomer.

Functionally, N-acetyl-D-glucosamine binding lectin. Shows no hemagglutinating activity towards rabbit erythrocytes and weak activity towards trypsin-treated erythrocytes. Has mitogenic activity towards human peripheral blood lymphocytes (HPBL). The chain is Lectin-D2 from Phytolacca americana (American pokeweed).